The sequence spans 183 residues: Large ribosomal subunit protein uL5 (183 aa).

Belongs to the universal ribosomal protein uL5 family. As to quaternary structure, part of the 50S ribosomal subunit; part of the 5S rRNA/L5/L18/L25 subcomplex. Contacts the 5S rRNA and the P site tRNA. Forms a bridge to the 30S subunit in the 70S ribosome.

Functionally, this is one of the proteins that bind and probably mediate the attachment of the 5S RNA into the large ribosomal subunit, where it forms part of the central protuberance. In the 70S ribosome it contacts protein S13 of the 30S subunit (bridge B1b), connecting the 2 subunits; this bridge is implicated in subunit movement. Contacts the P site tRNA; the 5S rRNA and some of its associated proteins might help stabilize positioning of ribosome-bound tRNAs. This Tropheryma whipplei (strain TW08/27) (Whipple's bacillus) protein is Large ribosomal subunit protein uL5.